Reading from the N-terminus, the 143-residue chain is Late embryogenesis abundant protein 1 (143 aa).

Positions 1-17 (MSSQQNQNRQGEQQEQG) are enriched in low complexity. Residues 1 to 143 (MSSQQNQNRQ…QAGEKVKGRD (143 aa)) are disordered. 4 repeat units span residues 47–57 (KTAEFRDSAGE), 69–79 (KGQEFKERAGE), 80–90 (KAEETKQRAGE), and 91–101 (KMDETKQRAGE). 2 stretches are compositionally biased toward basic and acidic residues: residues 47-60 (KTAE…ETIR) and 69-143 (KGQE…KGRD). The interval 47 to 101 (KTAEFRDSAGETIRDLTGQAQEKGQEFKERAGEKAEETKQRAGEKMDETKQRAGE) is 4 X 11 AA approximate repeats.

It belongs to the LEA type 4 family.

Its function is as follows. May be involved in defense against water stress. This is Late embryogenesis abundant protein 1 from Aphelenchoides avenae (Mycophagous nematode worm).